A 687-amino-acid polypeptide reads, in one-letter code: Protein white (687 aa).

Positions 1 to 30 (MGQEDQELLIRGGSKHPSAEHLNNGDSGAA) are disordered. The Cytoplasmic segment spans residues 1–419 (MGQEDQELLI…FMQFRAVLWR (419 aa)). Residues 93 to 341 (NRTRGLFCNE…FSYVGAQCPT (249 aa)) form the ABC transporter domain. Residue 130–137 (GSSGAGKT) participates in ATP binding. A helical membrane pass occupies residues 420–440 (SWLSVLKEPLLVKVRLIQTTM). The Extracellular segment spans residues 441–460 (VAILIGLIFLGQQLTQVGVM). A helical membrane pass occupies residues 461–481 (NINGAIFLFLTNMTFQNVFAT). At 482–497 (INVFTSELPVFMREAR) the chain is on the cytoplasmic side. A helical transmembrane segment spans residues 498-518 (SRLYRCDTYFLGKTIAELPLF). Residues 519 to 531 (LTVPLVFTAIAYP) lie on the Extracellular side of the membrane. A helical transmembrane segment spans residues 532–552 (MIGLRAGVLHFFNCLALVTLV). Over 553–568 (ANVSTSFGYLISCASS) the chain is Cytoplasmic. A helical transmembrane segment spans residues 569–589 (STSMALSVGPPVIIPFLLFGG). Residues 590-644 (FFLNSGSVPVYLKWLSYLSWFRYANEGLLINQWADVEPGEISCTSSNTTCPSSGK) are Extracellular-facing. An N-linked (GlcNAc...) asparagine glycan is attached at asparagine 636. The helical transmembrane segment at 645–665 (VILETLNFSAADLPLDYVGLA) threads the bilayer. The Cytoplasmic portion of the chain corresponds to 666 to 675 (ILIVSFRVLA).

It belongs to the ABC transporter superfamily. ABCG family. Eye pigment precursor importer (TC 3.A.1.204) subfamily. As to quaternary structure, may form a heterodimer with bw/brown. May form a heterodimer with st/scarlet. In terms of tissue distribution, expressed in the head (at protein level). Expressed in the eye, specifically in retina primary pigment cells, in the basement membrane of the base of secondary and tertiary pigment cells, and in retinula cells (at protein level). Expressed in the retina underlying lamina in the epithelial glia that surrounds the array of lamina cartridges (at protein level). Weakly expressed in photoreceptors, specifically in terminals of R1-R6, R7 and R8 (at protein level). Expressed at very low levels in medulla and central brain (at protein level). Expressed in principal cells of the Malpighian tubules.

The protein resides in the cytoplasmic vesicle membrane. The enzyme catalyses 3',5'-cyclic GMP(in) + ATP + H2O = 3',5'-cyclic GMP(out) + ADP + phosphate + H(+). The catalysed reaction is guanine(out) + ATP + H2O = guanine(in) + ADP + phosphate + H(+). It carries out the reaction riboflavin(in) + ATP + H2O = riboflavin(out) + ADP + phosphate + H(+). It catalyses the reaction (6S)-5,6,7,8-tetrahydrofolate(out) + ATP + H2O = (6S)-5,6,7,8-tetrahydrofolate(in) + ADP + phosphate + H(+). The enzyme catalyses L-tryptophan(out) + ATP + H2O = L-tryptophan(in) + ADP + phosphate + H(+). The catalysed reaction is L-kynurenine(out) + ATP + H2O = L-kynurenine(in) + ADP + phosphate + H(+). It carries out the reaction xanthine(out) + ATP + H2O = xanthine(in) + ADP + phosphate + H(+). Functionally, ATP-dependent transporter of the ATP-binding cassette (ABC) family which transports various molecules including bioamines, neurotransmitters, metabolic intermediates and second messengers. In the eye, required for the transport of the eye red and brown pigment precursors, guanine and tryptophan, into pigment cell granules. Probably in association with bw/brown, involved in the transport of guanine. Probably in association with st/scarlet involved in the transport of kynurenine and probably tryptophan. Involved in the transport of kynurenine in pupal eyes. May play a role in histamine uptake by the lamina epithelial glia which surrounds photoreceptors R1-R6. In Malpighian tubules, involved in the transport of cGMP, guanine, xanthine, riboflavin, kynurenine and tryptophan. Probably in association with br/brown, involved in aging-induced intestinal stem cell proliferation in the midgut by regulating tetrahydrofolate transport. Probably in association with st/scarlet, plays a role in zinc storage granule biogenesis in Malpighian tubule principal epithelial cells. The chain is Protein white from Drosophila melanogaster (Fruit fly).